A 217-amino-acid chain; its full sequence is NADH dehydrogenase (ubiquinone) 23 kDa subunit (217 aa).

Residues 1–26 (MSLTMRIFTASRNGQRLFGSHGARLL) constitute a mitochondrion transit peptide. 4Fe-4S ferredoxin-type domains follow at residues 109–138 (RRYPSGEERCIACKLCEAICPAQAITIEAE) and 148–177 (TRYDIDMTKCIYCGFCQEACPVDAIVEGPN). [4Fe-4S] cluster contacts are provided by Cys-118, Cys-121, Cys-124, Cys-128, Cys-157, Cys-160, Cys-163, and Cys-167.

This sequence belongs to the complex I 23 kDa subunit family. In terms of assembly, part of the mitochondrial membrane respiratory chain NADH dehydrogenase (Complex I). This is a component of the iron-sulfur (IP) fragment of the enzyme. [4Fe-4S] cluster serves as cofactor. As to expression, expressed in muscles (at protein level).

Its subcellular location is the mitochondrion. The enzyme catalyses a ubiquinone + NADH + 5 H(+)(in) = a ubiquinol + NAD(+) + 4 H(+)(out). Core subunit of the mitochondrial membrane respiratory chain NADH dehydrogenase (Complex I) that is believed to belong to the minimal assembly required for catalysis. Complex I functions in the transfer of electrons from NADH to the respiratory chain. The immediate electron acceptor for the enzyme is believed to be ubiquinone. The protein is NADH dehydrogenase (ubiquinone) 23 kDa subunit of Drosophila melanogaster (Fruit fly).